Reading from the N-terminus, the 276-residue chain is 4-hydroxy-tetrahydrodipicolinate reductase (276 aa).

Residues Gly10–Met15, Asp36, and Gly109–Thr111 contribute to the NAD(+) site. The Proton donor/acceptor role is filled by His165. His166 is a (S)-2,3,4,5-tetrahydrodipicolinate binding site. The active-site Proton donor is Lys169. Position 175–176 (Gly175–Thr176) interacts with (S)-2,3,4,5-tetrahydrodipicolinate.

The protein belongs to the DapB family.

The protein localises to the cytoplasm. The catalysed reaction is (S)-2,3,4,5-tetrahydrodipicolinate + NAD(+) + H2O = (2S,4S)-4-hydroxy-2,3,4,5-tetrahydrodipicolinate + NADH + H(+). The enzyme catalyses (S)-2,3,4,5-tetrahydrodipicolinate + NADP(+) + H2O = (2S,4S)-4-hydroxy-2,3,4,5-tetrahydrodipicolinate + NADPH + H(+). Its pathway is amino-acid biosynthesis; L-lysine biosynthesis via DAP pathway; (S)-tetrahydrodipicolinate from L-aspartate: step 4/4. Its function is as follows. Catalyzes the conversion of 4-hydroxy-tetrahydrodipicolinate (HTPA) to tetrahydrodipicolinate. This Prochlorococcus marinus (strain SARG / CCMP1375 / SS120) protein is 4-hydroxy-tetrahydrodipicolinate reductase.